Here is a 79-residue protein sequence, read N- to C-terminus: Acyl carrier protein (79 aa).

Residues 2-77 (ENIEQRVKKI…QAIDYVTAHL (76 aa)) enclose the Carrier domain. Residue Ser37 is modified to O-(pantetheine 4'-phosphoryl)serine.

Belongs to the acyl carrier protein (ACP) family. Post-translationally, 4'-phosphopantetheine is transferred from CoA to a specific serine of apo-ACP by AcpS. This modification is essential for activity because fatty acids are bound in thioester linkage to the sulfhydryl of the prosthetic group.

The protein resides in the cytoplasm. It functions in the pathway lipid metabolism; fatty acid biosynthesis. Carrier of the growing fatty acid chain in fatty acid biosynthesis. The chain is Acyl carrier protein from Aromatoleum aromaticum (strain DSM 19018 / LMG 30748 / EbN1) (Azoarcus sp. (strain EbN1)).